The chain runs to 1247 residues: Catenin delta-2 (1247 aa).

Disordered regions lie at residues 1-50 (MFAR…TTSA), 134-238 (SGIL…SAFH), and 256-309 (LPAP…KSYS). Ser7 carries the post-translational modification Phosphoserine. The segment covering 22 to 50 (PSASEKNSSLSPGLNTSNGDGSETETTSA) has biased composition (polar residues). Residues 49-84 (SAILASVKEQELQFERLTRELEAERQIVASQLERCK) adopt a coiled-coil conformation. Low complexity predominate over residues 149–160 (SLLSQSALQLNS). Over residues 172-207 (YHSNQTLALGDTAPSQLPARSTQARAAGQSFSQGTT) the composition is skewed to polar residues. Arg209 bears the Omega-N-methylarginine mark. A compositionally biased stretch (pro residues) spans 218–228 (PAPPPPPPREP). Arg261 is modified (omega-N-methylarginine). Phosphoserine occurs at positions 264 and 273. Residues 265–276 (PLTTTQGGSPTK) show a composition bias toward polar residues. Residues Arg279 and Arg293 each carry the omega-N-methylarginine modification. Polar residues predominate over residues 296 to 309 (SPKQSPSRLAKSYS). Residues Ser324, Ser357, Ser412, and Ser458 each carry the phosphoserine modification. The ARM 1 repeat unit spans residues 391-433 (GSRASYSSQHGHLAPELRALQSPEHHIDPIYEDRVYQKPPMRS). The interval 429–480 (PPMRSLSQSQGDPLPPAHTGTFRTSTAPSSPGVDSVPLQRTGSQHGPQNAAA) is disordered. The segment covering 466–475 (LQRTGSQHGP) has biased composition (polar residues). Residue Ser511 is modified to Phosphoserine. Tyr513 is modified (phosphotyrosine). The disordered stretch occupies residues 514–533 (SKSGPALPPEGTLARSPSID). 8 ARM repeats span residues 537–576 (KDPR…HLCF), 579–618 (NKIK…NLVY), 623–663 (DDNK…NLSS), 679–721 (LTNA…NVSS), 725–770 (EARR…NLSY), 832–872 (PKGI…NLAA), 904–943 (VYIR…NMAL), and 997–1040 (MENA…SMWQ). Disordered stretches follow at residues 1064-1131 (TIER…HTSR) and 1152-1176 (APAE…RKDY). The segment covering 1072-1081 (PYSSSRTPSI) has biased composition (polar residues). A phosphoserine mark is found at Ser1087 and Ser1098. The span at 1087 to 1100 (SPNNRSASAPASPR) shows a compositional bias: low complexity. Positions 1103–1112 (ISLKERKTDY) are enriched in basic and acidic residues.

The protein belongs to the beta-catenin family. Binds to E-cadherin at a juxtamembrane site within the cytoplasmic domain. Binds to PSEN1. Interacts with PDZD2. Interacts (via the extreme C-terminus) with FRMPD2 (via the PDZ 2 domain). Interacts with ZBTB33. Interacts with ARHGEF28. Interacts with CDK5. Interacts with CTNNB1. Interacts with GSK3A and GSK3B. Interacts with DNM2. Interacts with CCDC85B. Post-translationally, O-glycosylated. Phosphorylated by CDK5. Phosphorylated by GSK3B. As to expression, expressed in neurons and glial cells. Isoform 2 was found to be the most predominant isoform in various brain regions. Expressed at neuromuscular junctions.

The protein localises to the nucleus. It is found in the cell junction. Its subcellular location is the adherens junction. It localises to the cell projection. The protein resides in the dendrite. The protein localises to the perikaryon. Functionally, has a critical role in neuronal development, particularly in the formation and/or maintenance of dendritic spines and synapses. Involved in the regulation of canonical Wnt signaling. It probably acts on beta-catenin turnover, facilitating beta-catenin interaction with GSK3B, phosphorylation, ubiquitination and degradation. May be involved in neuronal cell adhesion and tissue morphogenesis and integrity by regulating adhesion molecules. Functions as a transcriptional activator when bound to ZBTB33. This chain is Catenin delta-2 (Ctnnd2), found in Mus musculus (Mouse).